We begin with the raw amino-acid sequence, 158 residues long: Cyclic pyranopterin monophosphate synthase (158 aa).

Substrate contacts are provided by residues 76 to 78 and 114 to 115; these read LCH and ME. The active site involves Asp-129.

The protein belongs to the MoaC family. Homohexamer; trimer of dimers.

The catalysed reaction is (8S)-3',8-cyclo-7,8-dihydroguanosine 5'-triphosphate = cyclic pyranopterin phosphate + diphosphate. It functions in the pathway cofactor biosynthesis; molybdopterin biosynthesis. In terms of biological role, catalyzes the conversion of (8S)-3',8-cyclo-7,8-dihydroguanosine 5'-triphosphate to cyclic pyranopterin monophosphate (cPMP). This is Cyclic pyranopterin monophosphate synthase from Shewanella halifaxensis (strain HAW-EB4).